We begin with the raw amino-acid sequence, 184 residues long: Gremlin-1 (184 aa).

The signal sequence occupies residues 1-24 (MSRTAYTVGALLLLLGTLLPAAEG). Positions 24-77 (GKKKGSQGAIPPPDKAQHNDSEQTQSPQQPGSRNRGRGQGRGTAMPGEEVLESS) are disordered. An N-linked (GlcNAc...) asparagine glycan is attached at Asn42. 4 cysteine pairs are disulfide-bonded: Cys94–Cys144, Cys108–Cys158, Cys118–Cys176, and Cys122–Cys178. Residues 94-184 (CKTQPLKQTI…QCRCISIDLD (91 aa)) form the CTCK domain.

Belongs to the DAN family. Homodimer; can also form homooligomers. Interacts with BMP2; can form higher oligomers with BMP2. Interacts with SLIT1 and SLIT2 in a glycosylation-dependent manner. In terms of tissue distribution, highly expressed in small intestine, fetal brain and colon. Expression is restricted to intestinal subepithelial myofibroblasts (ISEMFs) at the crypt base. In subjects with HMPS1, by contrast, GREM1 is expressed, not only in basal ISEMFs, but also at very high levels in epithelial cells (predominantly colonocytes), with expression extending most of the way up the sides of the crypt. Weakly expressed in brain, ovary, prostate, pancreas and skeletal muscle. In brain found in the region localized around the internal capsule in the large subcortical nuclei, including caudate, putamen, substantia nigra, thalamus and subthalamus. Predominantly expressed in normal cells including neurons, astrocytes and fibroblasts.

It is found in the secreted. Functionally, cytokine that may play an important role during carcinogenesis and metanephric kidney organogenesis, as a BMP antagonist required for early limb outgrowth and patterning in maintaining the FGF4-SHH feedback loop. Down-regulates the BMP4 signaling in a dose-dependent manner. Antagonist of BMP2; inhibits BMP2-mediated differentiation of osteoblasts (in vitro). Acts as inhibitor of monocyte chemotaxis. Can inhibit the growth or viability of normal cells but not transformed cells when is overexpressed. This chain is Gremlin-1 (GREM1), found in Homo sapiens (Human).